The primary structure comprises 687 residues: CWF19-like protein 2 homolog (687 aa).

Residues 6–51 (FESGREKDKARQELREAREAMLQQAKERAELRGQRERQKELRGEAD) are a coiled coil. Basic and acidic residues predominate over residues 24–50 (EAMLQQAKERAELRGQRERQKELRGEA). The interval 24 to 281 (EAMLQQAKER…PKSRPSCLTD (258 aa)) is disordered. Over residues 66-92 (KKSKKNVSKHKSRSKSKSSKKSRKHRN) the composition is skewed to basic residues. The segment covering 93-107 (SSSSSESSTSSSSSF) has biased composition (low complexity). A coiled-coil region spans residues 108–131 (SEDEKERKRRKKKSKRSRKESASE). Over residues 114 to 125 (RKRRKKKSKRSR) the composition is skewed to basic residues. Phosphoserine occurs at positions 128 and 130. 2 stretches are compositionally biased toward basic and acidic residues: residues 146 to 157 (VTKKEPPQRDDW) and 168 to 180 (FSRE…KPNE). Residues 290–325 (KAIKAELKGKKELAAELNQQLEAARKERAEFIASGE) are a coiled coil. The interval 355–383 (VRPLVQSGDPNESYGGRMGPKRGSKKVDT) is disordered. Residues 444–475 (KQISASDAEKREMQSAIREHEKLVATLDNCER) adopt a coiled-coil conformation.

This sequence belongs to the CWF19 family.

The sequence is that of CWF19-like protein 2 homolog from Drosophila melanogaster (Fruit fly).